Consider the following 332-residue polypeptide: 2-hydroxyacid dehydrogenase homolog 1 (332 aa).

Residues 154–155, 233–235, and Asp259 each bind NAD(+); these read RI and TSR. The active site involves Arg235. Residue Glu264 is part of the active site. His296 serves as the catalytic Proton donor. Position 296-299 (296-299) interacts with NAD(+); it reads HQAF.

The protein belongs to the D-isomer specific 2-hydroxyacid dehydrogenase family.

It localises to the cytoplasm. The protein localises to the nucleus. The protein is 2-hydroxyacid dehydrogenase homolog 1 of Schizosaccharomyces pombe (strain 972 / ATCC 24843) (Fission yeast).